The following is a 274-amino-acid chain: NAD(P)H dehydrogenase [quinone] 1 (274 aa).

Residues H12, 18-19 (FN), and Q67 contribute to the FAD site. S82 bears the Phosphoserine mark. 104-107 (LQWF) contributes to the FAD binding site. 126–128 (AYT) provides a ligand contact to substrate. Residues 148-151 (TTGG), Y156, and R201 each bind FAD. The important for apoenzyme conformational stability stretch occupies residues 225–274 (PSSLFDLNFQAGFLMKKEVQDEEKNKKFGLSVGHHLGKSIPTDNQIKARK). Residues K250 and K251 each participate in a glycyl lysine isopeptide (Lys-Gly) (interchain with G-Cter in SUMO2) cross-link.

This sequence belongs to the NAD(P)H dehydrogenase (quinone) family. As to quaternary structure, homodimer. Interacts with PDLIM4 isoform 2; this interaction stabilizes PDLIM4 isoform 2 in response to oxidative stress and protects it from ubiquitin-independent degradation by the core 20S proteasome. Interacts with TP73 (via SAM domain); this interaction is NADH-dependent, stabilizes TP73 in response to oxidative stress and protects it from ubiquitin-independent degradation by the 20S proteasome. Interacts with TP53; this interaction is NADH-dependent, stabilizes TP53 in response to oxidative stress and protects it from ubiquitin-independent degradation by the 20S proteasome. Requires FAD as cofactor.

The protein resides in the cytoplasm. It is found in the cytosol. It carries out the reaction a quinone + NADH + H(+) = a quinol + NAD(+). The enzyme catalyses a quinone + NADPH + H(+) = a quinol + NADP(+). It catalyses the reaction ubiquinone-10 + NADH + H(+) = ubiquinol-10 + NAD(+). The catalysed reaction is menadione + NADH + H(+) = menadiol + NAD(+). Inhibited by dicoumarol. Functionally, flavin-containing quinone reductase that catalyzes two-electron reduction of quinones to hydroquinones using either NADH or NADPH as electron donors. In a ping-pong kinetic mechanism, the electrons are sequentially transferred from NAD(P)H to flavin cofactor and then from reduced flavin to the quinone, bypassing the formation of semiquinone and reactive oxygen species. Regulates cellular redox state primarily through quinone detoxification. Reduces components of plasma membrane redox system such as coenzyme Q and vitamin quinones, producing antioxidant hydroquinone forms. In the process may function as superoxide scavenger to prevent hydroquinone oxidation and facilitate excretion. Alternatively, can activate quinones and their derivatives by generating redox reactive hydroquinones with DNA cross-linking antitumor potential. Acts as a gatekeeper of the core 20S proteasome known to degrade proteins with unstructured regions. Upon oxidative stress, interacts with tumor suppressors TP53 and TP73 in a NADH-dependent way and inhibits their ubiquitin-independent degradation by the 20S proteasome. In Homo sapiens (Human), this protein is NAD(P)H dehydrogenase [quinone] 1.